The primary structure comprises 258 residues: Trypsin eta (258 aa).

A signal peptide spans M1–A22. A propeptide spans Q23–R27 (activation peptide). The Peptidase S1 domain occupies I28 to V258. A disulfide bridge links C59 with C75. Residues H74 and D120 each act as charge relay system in the active site. Cystine bridges form between C185/C200 and C211/C235. The active-site Charge relay system is S215.

Belongs to the peptidase S1 family.

The protein resides in the secreted. The protein localises to the extracellular space. It catalyses the reaction Preferential cleavage: Arg-|-Xaa, Lys-|-Xaa.. The protein is Trypsin eta (etaTry) of Drosophila erecta (Fruit fly).